The chain runs to 68 residues: Large ribosomal subunit protein uL29 (68 aa).

This sequence belongs to the universal ribosomal protein uL29 family.

This chain is Large ribosomal subunit protein uL29, found in Nitrobacter winogradskyi (strain ATCC 25391 / DSM 10237 / CIP 104748 / NCIMB 11846 / Nb-255).